A 251-amino-acid polypeptide reads, in one-letter code: MSGHSKWATIKHAKGAADAKRGQLFTKLSREIIFAAKQGGPSPEGNARLRLAIQKAKDNRMPSDNIERAIKKGSGELEGATVIEIILEGYGPGGVAVLVNGMSDNRNRTVSDVRHMFSKSGGSLAESGAVSWIFETKGVIGVETVGLDTDELSLKAIDMGAEDVNIEEDYMEIYTAMPDMEKVRQQLEAQGVTVDSAEINMIPKNTVKLDEETSLQVLKLLDKLEELDDVQTVSSNADFDPEVVEKYHSQA.

Belongs to the TACO1 family.

The protein localises to the cytoplasm. The polypeptide is Probable transcriptional regulatory protein DET0444 (Dehalococcoides mccartyi (strain ATCC BAA-2266 / KCTC 15142 / 195) (Dehalococcoides ethenogenes (strain 195))).